A 301-amino-acid chain; its full sequence is GTPase Era (301 aa).

Positions 8-174 (KSGFVALVGR…LKTLKDYLPE (167 aa)) constitute an Era-type G domain. The segment at 16 to 23 (GRPNVGKS) is G1. A GTP-binding site is contributed by 16 to 23 (GRPNVGKS). The segment at 42–46 (QTTRN) is G2. The interval 63-66 (DTPG) is G3. GTP is bound by residues 63–67 (DTPGI) and 124–127 (NKID). The tract at residues 124 to 127 (NKID) is G4. Residues 153-155 (ISA) form a G5 region. The 86-residue stretch at 197–282 (IREQILRLTD…NLKLWVKVRR (86 aa)) folds into the KH type-2 domain.

The protein belongs to the TRAFAC class TrmE-Era-EngA-EngB-Septin-like GTPase superfamily. Era GTPase family. In terms of assembly, monomer.

It localises to the cytoplasm. The protein localises to the cell membrane. In terms of biological role, an essential GTPase that binds both GDP and GTP, with rapid nucleotide exchange. Plays a role in 16S rRNA processing and 30S ribosomal subunit biogenesis and possibly also in cell cycle regulation and energy metabolism. The protein is GTPase Era of Lactobacillus delbrueckii subsp. bulgaricus (strain ATCC 11842 / DSM 20081 / BCRC 10696 / JCM 1002 / NBRC 13953 / NCIMB 11778 / NCTC 12712 / WDCM 00102 / Lb 14).